Here is a 128-residue protein sequence, read N- to C-terminus: Fluoride-specific ion channel FluC (128 aa).

Transmembrane regions (helical) follow at residues 3–23 (LYALTAIGAGAALGAWLRWWF), 33–53 (TLPLGTLAANLTGGYLIGAAI), 69–89 (FAITGFLGGLTTFSTFSAETV), and 99–119 (WTFVIIFSHLTGSLVMTILGI). 2 residues coordinate Na(+): Gly76 and Thr79.

This sequence belongs to the fluoride channel Fluc/FEX (TC 1.A.43) family.

The protein resides in the cell inner membrane. It carries out the reaction fluoride(in) = fluoride(out). With respect to regulation, na(+) is not transported, but it plays an essential structural role and its presence is essential for fluoride channel function. Fluoride-specific ion channel. Important for reducing fluoride concentration in the cell, thus reducing its toxicity. In Nitrosospira multiformis (strain ATCC 25196 / NCIMB 11849 / C 71), this protein is Fluoride-specific ion channel FluC.